Consider the following 45-residue polypeptide: Large ribosomal subunit protein bL34 (45 aa).

Residues 1–45 (MTKRTLGGTSRKRKRVSGFRVRMRSHTGRRVIRTRRKRGRSRLAV) form a disordered region. The segment covering 10–45 (SRKRKRVSGFRVRMRSHTGRRVIRTRRKRGRSRLAV) has biased composition (basic residues).

This sequence belongs to the bacterial ribosomal protein bL34 family.

In Parasynechococcus marenigrum (strain WH8102), this protein is Large ribosomal subunit protein bL34.